The sequence spans 105 residues: UPF0145 protein (105 aa).

This sequence belongs to the UPF0145 family.

The polypeptide is UPF0145 protein (Enterococcus faecalis (Streptococcus faecalis)).